We begin with the raw amino-acid sequence, 232 residues long: ATP-dependent Clp protease proteolytic subunit 2 (232 aa).

The active-site Nucleophile is the Ser-124. His-149 is a catalytic residue.

It belongs to the peptidase S14 family. Fourteen ClpP subunits assemble into 2 heptameric rings which stack back to back to give a disk-like structure with a central cavity, resembling the structure of eukaryotic proteasomes.

It is found in the cytoplasm. The catalysed reaction is Hydrolysis of proteins to small peptides in the presence of ATP and magnesium. alpha-casein is the usual test substrate. In the absence of ATP, only oligopeptides shorter than five residues are hydrolyzed (such as succinyl-Leu-Tyr-|-NHMec, and Leu-Tyr-Leu-|-Tyr-Trp, in which cleavage of the -Tyr-|-Leu- and -Tyr-|-Trp bonds also occurs).. Cleaves peptides in various proteins in a process that requires ATP hydrolysis. Has a chymotrypsin-like activity. Plays a major role in the degradation of misfolded proteins. This Nostoc sp. (strain PCC 7120 / SAG 25.82 / UTEX 2576) protein is ATP-dependent Clp protease proteolytic subunit 2.